Reading from the N-terminus, the 360-residue chain is Mannose-1-phosphate guanylyltransferase catalytic subunit beta (360 aa).

Positions 2–222 (KALILVGGYG…QGFWMDIGQP (221 aa)) are substrate-binding domain. Position 110 (Asp110) interacts with GDP-alpha-D-mannose. Asp110 provides a ligand contact to Mg(2+). Lys162 is a catalytic residue. Asp218 lines the GDP-alpha-D-mannose pocket. Asp218 contacts Mg(2+). The hexapeptide repeat domain stretch occupies residues 245 to 360 (CSGPGIVGNV…ESVPEPGIIM (116 aa)).

The protein belongs to the transferase hexapeptide repeat family. Component of the GMPPA-GMPPB mannose-1-phosphate guanylyltransferase complex composed of 4 GMPPA subunits and 8 GMPPB subunits; the complex is organized into three layers, a central layer made up of 2 GMPPA dimers sandwiched between two layers each made up of 2 GMPPB dimers. GMPPB catalytic activity is reduced when part of the complex and binding of GDP-alpha-D-Mannose by GMPPA induces allosteric feedback inhibition of GMPPB. It depends on Mg(2+) as a cofactor. In terms of tissue distribution, expressed in the liver (at protein level).

It localises to the cytoplasm. It catalyses the reaction alpha-D-mannose 1-phosphate + GTP + H(+) = GDP-alpha-D-mannose + diphosphate. It functions in the pathway nucleotide-sugar biosynthesis; GDP-alpha-D-mannose biosynthesis; GDP-alpha-D-mannose from alpha-D-mannose 1-phosphate (GTP route): step 1/1. Its activity is regulated as follows. Enzyme activity is reduced by incorporation into the GMPPA-GMPPB mannose-1-phosphate guanylyltransferase complex. Allosterically inhibited, when part of the GMPPA-GMPPB complex, by GDP-alpha-D-mannose binding to GMPPA. Catalytic subunit of the GMPPA-GMPPB mannose-1-phosphate guanylyltransferase complex. Catalyzes the formation of GDP-mannose, an essential precursor of glycan moieties of glycoproteins and glycolipids. Can catalyze the reverse reaction in vitro. Together with GMPPA regulates GDP-alpha-D-mannose levels. The polypeptide is Mannose-1-phosphate guanylyltransferase catalytic subunit beta (Sus scrofa (Pig)).